The primary structure comprises 185 residues: Ribosome-recycling factor (185 aa).

The protein belongs to the RRF family.

The protein resides in the cytoplasm. Its function is as follows. Responsible for the release of ribosomes from messenger RNA at the termination of protein biosynthesis. May increase the efficiency of translation by recycling ribosomes from one round of translation to another. The polypeptide is Ribosome-recycling factor (Lacticaseibacillus casei (strain BL23) (Lactobacillus casei)).